A 514-amino-acid polypeptide reads, in one-letter code: Myocyte-specific enhancer factor 2D (514 aa).

In terms of domain architecture, MADS-box spans 3 to 57 (RKKIQIQRITDERNRQVTFTKRKFGLMKKAYELSVLCDCEIALIIFNHSNKLFQY). The mef2-type DNA-binding region spans 58–86 (ASTDMDKVLLKYTEYNEPHESRTNADIIE). A phosphoserine mark is found at D97, S98, and S106. Residue L107 is modified to Phosphothreonine. Residue S110 is modified to Phosphoserine. S121 is subject to Phosphoserine; by PKA. The tract at residues 174–207 (TDPRLLSPQQPALQRNSVSPGLPQRPASAGAMLG) is disordered. Position 180 is a phosphoserine; by MAPK7 (S180). The span at 180–192 (SPQQPALQRNSVS) shows a compositional bias: polar residues. S190 is modified (phosphoserine; by PKA). S231 is modified (phosphoserine). Positions 244 to 269 (NKVIPAKSPPPPTHNTQLGAPSRKPD) are disordered. At K245 the chain carries N6-acetyllysine. A Phosphoserine modification is found at S251. Residues 286–292 (TEDHLDL) form a beta domain region. 2 disordered regions span residues 364-399 (WQQPQPPQQPQPPQPPQSQPQPPQPQPQQPPQQQPH) and 430-514 (SIKS…WTLK). A compositionally biased stretch (pro residues) spans 367–396 (PQPPQQPQPPQPPQSQPQPPQPQPQQPPQQ). K432 is modified (N6-acetyllysine; alternate). A Glycyl lysine isopeptide (Lys-Gly) (interchain with G-Cter in SUMO); alternate cross-link involves residue K432. S437 bears the Phosphoserine mark.

Belongs to the MEF2 family. As to quaternary structure, forms a complex with class II HDACs in undifferentiating cells. On myogenic differentiation, HDACs are released into the cytoplasm allowing MEF2s to interact with other proteins for activation. Interacts with HDAC4 (in undifferentiating cells); the interaction translocates MEF2D to nuclear dots. Forms a heterodimer with MEF2A. Interacts with MAPK7; the interaction phosphorylates but does not activate MEF2D. Interacts with MYOG. Interacts with CCAR2 and HDAC3. Phosphorylated on Ser-437 is which is required for Lys-432 sumoylation and inhibits transcriptional activity. Phosphorylation on this residue by CDK5 is dependent on p35 and calpains. Phosphorylated by PKA at Ser-121 and Ser-190 represses transcriptional activity in embryonic and postnatal skeletal muscle, and stabilizes protein levels. No in vitro phosphorylation by PKA on Thr-20. Phosphorylated and activated by CaMK4. Post-translationally, acetylated on Lys-432 by CREBBP. Acetylated by EP300. Deacetylated by SIRT1 and HDAC3. In terms of processing, sumoylated on Lys-432 with SUMO2 but not SUMO1; which inhibits transcriptional activity and myogenic activity. Desumoylated by SENP3. Proteolytically cleaved in cerebellar granule neurons by caspase 7 following neurotoxicity. Preferentially cleaves the CDK5-mediated hyperphosphorylated form which leads to neuron apoptosis and transcriptional inactivation. In terms of tissue distribution, widely expressed though mainly restricted to skeletal and cardiac muscle, brain, neurons and lymphocytes. Differentially expressed depending on if isoforms contain the beta domain or not, with the total expression of the beta domain-lacking isoforms vastly exceeding that of the beta domain-containing isoforms. Isoforms containing the beta domain are expressed primarily in skeletal and cardiac muscle and in brain. Also present in lung and testis. Splicing to include the beta domain is induced in differentiating myocytes. Isoforms lacking the beta domain are expressed less abundantly in skeletal muscle, brain and lymphocytes, and are uniquely found in ovary, liver, spleen and kidney. In embryos, the beta domain-containing and beta domain-lacking isoforms are equally expressed. Also expressed cerebellar granule neurons and other regions of the CNS. Highest levels in the olfactory bulb, cortex, hippocampus, thalamus and cerebellum.

The protein localises to the nucleus. In terms of biological role, transcriptional activator which binds specifically to the MEF2 element, 5'-YTA[AT](4)TAR-3', found in numerous muscle-specific, growth factor- and stress-induced genes. Mediates cellular functions not only in skeletal and cardiac muscle development, but also in neuronal differentiation and survival. Plays diverse roles in the control of cell growth, survival and apoptosis via p38 MAPK signaling in muscle-specific and/or growth factor-related transcription. Plays a critical role in the regulation of neuronal apoptosis. The polypeptide is Myocyte-specific enhancer factor 2D (Mef2d) (Mus musculus (Mouse)).